A 134-amino-acid polypeptide reads, in one-letter code: D-ribose pyranase (134 aa).

Histidine 20 (proton donor) is an active-site residue. Substrate is bound by residues aspartate 28, histidine 99, and 123 to 125 (FSN).

This sequence belongs to the RbsD / FucU family. RbsD subfamily. In terms of assembly, homodecamer.

It localises to the cytoplasm. It carries out the reaction beta-D-ribopyranose = beta-D-ribofuranose. It participates in carbohydrate metabolism; D-ribose degradation; D-ribose 5-phosphate from beta-D-ribopyranose: step 1/2. In terms of biological role, catalyzes the interconversion of beta-pyran and beta-furan forms of D-ribose. The protein is D-ribose pyranase of Staphylococcus epidermidis (strain ATCC 12228 / FDA PCI 1200).